The chain runs to 60 residues: Cytotoxin 3 (60 aa).

Intrachain disulfides connect Cys3-Cys21, Cys14-Cys38, Cys42-Cys53, and Cys54-Cys59.

Belongs to the three-finger toxin family. Short-chain subfamily. Type IA cytotoxin sub-subfamily. As to quaternary structure, monomer in solution; Homodimer and oligomer in the presence of negatively charged lipids forming a pore with a size ranging between 20 and 30 Angstroms. In terms of tissue distribution, expressed by the venom gland.

The protein resides in the secreted. It is found in the target cell membrane. Its function is as follows. Shows cytolytic activity on many different cells by forming pore in lipid membranes. In vivo, increases heart rate or kills the animal by cardiac arrest. In addition, it binds to heparin with high affinity, interacts with Kv channel-interacting protein 1 (KCNIP1) in a calcium-independent manner, and binds to integrin alpha-V/beta-3 (ITGAV/ITGB3) with moderate affinity. This is Cytotoxin 3 from Naja mossambica (Mozambique spitting cobra).